Here is a 353-residue protein sequence, read N- to C-terminus: Quinolinate synthase (353 aa).

Iminosuccinate is bound by residues H47 and S68. C113 contributes to the [4Fe-4S] cluster binding site. Residues 139–141 and S156 each bind iminosuccinate; that span reads YAN. Residue C200 coordinates [4Fe-4S] cluster. Iminosuccinate is bound by residues 226 to 228 and T243; that span reads HPE. Position 297 (C297) interacts with [4Fe-4S] cluster.

Belongs to the quinolinate synthase family. Type 1 subfamily. The cofactor is [4Fe-4S] cluster.

Its subcellular location is the cytoplasm. The enzyme catalyses iminosuccinate + dihydroxyacetone phosphate = quinolinate + phosphate + 2 H2O + H(+). Its pathway is cofactor biosynthesis; NAD(+) biosynthesis; quinolinate from iminoaspartate: step 1/1. Catalyzes the condensation of iminoaspartate with dihydroxyacetone phosphate to form quinolinate. This Vibrio vulnificus (strain YJ016) protein is Quinolinate synthase.